A 216-amino-acid chain; its full sequence is Dimethylamine corrinoid protein 1 (216 aa).

The 91-residue stretch at Met-1–Lys-91 folds into the B12-binding N-terminal domain. One can recognise a B12-binding domain in the interval Leu-92 to Lys-216. Position 105 (His-105) interacts with methylcob(III)alamin.

It belongs to the methylamine corrinoid protein family.

Its pathway is one-carbon metabolism; methanogenesis from dimethylamine. Its function is as follows. Acts as a methyl group carrier between MtbB and MtbA. This chain is Dimethylamine corrinoid protein 1 (mtbC1), found in Methanosarcina mazei (strain ATCC BAA-159 / DSM 3647 / Goe1 / Go1 / JCM 11833 / OCM 88) (Methanosarcina frisia).